The chain runs to 357 residues: Holliday junction branch migration complex subunit RuvB (357 aa).

A large ATPase domain (RuvB-L) region spans residues 4–195 (TDKLAAKAVS…FGIVARLEFY (192 aa)). Residues leucine 34, arginine 35, glycine 76, lysine 79, threonine 80, threonine 81, 142–144 (EDY), arginine 185, tyrosine 195, and arginine 232 each bind ATP. Residue threonine 80 participates in Mg(2+) binding. Residues 196–266 (TPTELARIVT…VADAALAMLD (71 aa)) form a small ATPAse domain (RuvB-S) region. The segment at 269 to 357 (AVGFDLMDRK…PARDLWDNNA (89 aa)) is head domain (RuvB-H). 3 residues coordinate DNA: arginine 305, arginine 324, and arginine 329.

Belongs to the RuvB family. In terms of assembly, homohexamer. Forms an RuvA(8)-RuvB(12)-Holliday junction (HJ) complex. HJ DNA is sandwiched between 2 RuvA tetramers; dsDNA enters through RuvA and exits via RuvB. An RuvB hexamer assembles on each DNA strand where it exits the tetramer. Each RuvB hexamer is contacted by two RuvA subunits (via domain III) on 2 adjacent RuvB subunits; this complex drives branch migration. In the full resolvosome a probable DNA-RuvA(4)-RuvB(12)-RuvC(2) complex forms which resolves the HJ.

It localises to the cytoplasm. The enzyme catalyses ATP + H2O = ADP + phosphate + H(+). Its function is as follows. The RuvA-RuvB-RuvC complex processes Holliday junction (HJ) DNA during genetic recombination and DNA repair, while the RuvA-RuvB complex plays an important role in the rescue of blocked DNA replication forks via replication fork reversal (RFR). RuvA specifically binds to HJ cruciform DNA, conferring on it an open structure. The RuvB hexamer acts as an ATP-dependent pump, pulling dsDNA into and through the RuvAB complex. RuvB forms 2 homohexamers on either side of HJ DNA bound by 1 or 2 RuvA tetramers; 4 subunits per hexamer contact DNA at a time. Coordinated motions by a converter formed by DNA-disengaged RuvB subunits stimulates ATP hydrolysis and nucleotide exchange. Immobilization of the converter enables RuvB to convert the ATP-contained energy into a lever motion, pulling 2 nucleotides of DNA out of the RuvA tetramer per ATP hydrolyzed, thus driving DNA branch migration. The RuvB motors rotate together with the DNA substrate, which together with the progressing nucleotide cycle form the mechanistic basis for DNA recombination by continuous HJ branch migration. Branch migration allows RuvC to scan DNA until it finds its consensus sequence, where it cleaves and resolves cruciform DNA. The chain is Holliday junction branch migration complex subunit RuvB from Ralstonia nicotianae (strain ATCC BAA-1114 / GMI1000) (Ralstonia solanacearum).